Consider the following 554-residue polypeptide: Serine/threonine-protein kinase ROP18 (554 aa).

Residues 17-40 form a helical membrane-spanning segment; that stretch reads GLATLLPKTACLAGLNVALVFLLF. Residues 252-531 form the Protein kinase domain; that stretch reads LVRGAPLGSG…PLQALETAAF (280 aa). Residues G262, A264, and K281 each contribute to the ATP site. An N-linked (GlcNAc...) asparagine glycan is attached at N306. 3 residues coordinate ATP: M357, A359, and D362. A glycan (N-linked (GlcNAc...) asparagine) is linked at N377. Residue D409 is the Proton acceptor of the active site. D427 serves as a coordination point for ATP. D427 provides a ligand contact to Mg(2+). The N-linked (GlcNAc...) asparagine glycan is linked to N434. An intrachain disulfide couples C478 to C497.

Belongs to the protein kinase superfamily. Ser/Thr protein kinase family. As to quaternary structure, component of a complex at least composed of ROP18, GRA7 and ROP2. Component of a complex at least composed of ROP18 and ROP5. Interacts with GRA7 in the absence of ROP5. Interacts with mouse IRGB6 (TGTP1/TGTP2).

Its subcellular location is the parasitophorous vacuole membrane. The protein localises to the cytoplasmic vesicle. It is found in the secretory vesicle. The protein resides in the rhoptry. The catalysed reaction is L-threonyl-[protein] + ATP = O-phospho-L-threonyl-[protein] + ADP + H(+). It carries out the reaction L-seryl-[protein] + ATP = O-phospho-L-seryl-[protein] + ADP + H(+). Kinase activity is enhanced by polymorphic pseudokinase ROP5. Protein kinase. Virulence factor. Mediates parasite survival in mouse macrophages and monocytes. Reduces the accumulation of mouse IRGA6 (IIGP1) and IRGB6 (TGTP1/TGTP2), immunity-related GTPases (IRGs) that protect mice from infection by certain intracellular pathogens, on the parasitophorous vacuole and IRG-mediated killing of parasites by mouse cells; probably in connection with ROP5. In complex with GRA7, targets IRGs to prevent IRG-mediated parasite killing by mouse cells. Phosphorylates mouse IRGA6 (IIGP1); its activity toward mouse IRGA6 is promoted by GRA7 or ROP5. Phosphorylates mouse IRGB6 (TGTP1/TGTP2). Phosphorylates mouse IRGB10 (GM12250). Does not affect IFN-gamma (IFNG)-mediated parasite killing in human cells that do not possess the large variety of IRGs. This is Serine/threonine-protein kinase ROP18 from Toxoplasma gondii.